Reading from the N-terminus, the 442-residue chain is Probable carboxypeptidase PABG_01461 (442 aa).

A signal peptide spans 1-20 (MKLQYLVALLSVQAVPPVTA). Asn-102 is a glycosylation site (N-linked (GlcNAc...) asparagine). Asp-160 serves as a coordination point for Zn(2+). Glu-192 (proton acceptor) is an active-site residue. A Zn(2+)-binding site is contributed by Glu-193. The N-linked (GlcNAc...) asparagine glycan is linked to Asn-343.

The protein belongs to the peptidase M20A family. The cofactor is Zn(2+).

Its subcellular location is the secreted. The chain is Probable carboxypeptidase PABG_01461 from Paracoccidioides brasiliensis (strain Pb03).